Reading from the N-terminus, the 127-residue chain is Aspartate 1-decarboxylase (127 aa).

Residue Ser25 is the Schiff-base intermediate with substrate; via pyruvic acid of the active site. Ser25 bears the Pyruvic acid (Ser) mark. Residue Thr57 participates in substrate binding. Tyr58 (proton donor) is an active-site residue. 73–75 (GAA) lines the substrate pocket.

It belongs to the PanD family. As to quaternary structure, heterooctamer of four alpha and four beta subunits. The cofactor is pyruvate. Post-translationally, is synthesized initially as an inactive proenzyme, which is activated by self-cleavage at a specific serine bond to produce a beta-subunit with a hydroxyl group at its C-terminus and an alpha-subunit with a pyruvoyl group at its N-terminus.

It localises to the cytoplasm. The catalysed reaction is L-aspartate + H(+) = beta-alanine + CO2. It functions in the pathway cofactor biosynthesis; (R)-pantothenate biosynthesis; beta-alanine from L-aspartate: step 1/1. Catalyzes the pyruvoyl-dependent decarboxylation of aspartate to produce beta-alanine. In Halalkalibacterium halodurans (strain ATCC BAA-125 / DSM 18197 / FERM 7344 / JCM 9153 / C-125) (Bacillus halodurans), this protein is Aspartate 1-decarboxylase.